We begin with the raw amino-acid sequence, 208 residues long: Uracil phosphoribosyltransferase (208 aa).

5-phospho-alpha-D-ribose 1-diphosphate is bound by residues R78, R103, and 130-138; that span reads DPMLATGGS. Residues I193 and 198 to 200 contribute to the uracil site; that span reads GDA. D199 serves as a coordination point for 5-phospho-alpha-D-ribose 1-diphosphate.

The protein belongs to the UPRTase family. Mg(2+) serves as cofactor.

The enzyme catalyses UMP + diphosphate = 5-phospho-alpha-D-ribose 1-diphosphate + uracil. The protein operates within pyrimidine metabolism; UMP biosynthesis via salvage pathway; UMP from uracil: step 1/1. With respect to regulation, allosterically activated by GTP. Catalyzes the conversion of uracil and 5-phospho-alpha-D-ribose 1-diphosphate (PRPP) to UMP and diphosphate. In Yersinia pestis, this protein is Uracil phosphoribosyltransferase.